The chain runs to 445 residues: C-type lectin domain family 4 member M (445 aa).

Over 1–49 (MSDSKEPRVQQLGLLEEDPTTSGIRLFPRDFQFQQIHGHKSSTGCLGHG) the chain is Cytoplasmic. The Endocytosis signal signature appears at 14 to 15 (LL). A helical; Signal-anchor for type II membrane protein transmembrane segment spans residues 50 to 70 (PLVLQLLSFTLLAGVLVAILV). Residues 71 to 445 (QVSKVPSSLS…KKPAVCFRDE (375 aa)) lie on the Extracellular side of the membrane. Residue asparagine 92 is glycosylated (N-linked (GlcNAc...) asparagine). A run of 9 repeats spans residues 108–130 (KLQEIYQELTQLKAAVGELPEKS), 131–151 (KLQEIYQELTQLKAAVGELPE), 154–176 (KLQEIYQELTQLKAAVGELPEKS), 177–199 (KLQEIYQELTQLKAAVGELPEKS), 200–222 (KLQEIYQELTQLKAAVGELPEKS), 223–245 (KLQETYQELTQLKAAVGELPEKS), 246–268 (KLQEIYQELTQLKAAVGELPEKS), 269–291 (ELQEIYQELTQLKAALGKLPDQS), and 292–314 (KQQQIYQELTDLKTAFERLCRHC). The tract at residues 108–315 (KLQEIYQELT…AFERLCRHCP (208 aa)) is 9 X approximate tandem repeats. 4 disulfides stabilise this stretch: cysteine 311–cysteine 441, cysteine 314–cysteine 325, cysteine 342–cysteine 435, and cysteine 414–cysteine 427. The C-type lectin domain occupies 320–436 (FFQGNCYFMS…CDIDNYWICK (117 aa)). Residues glutamate 405, asparagine 407, serine 409, glutamate 412, asparagine 423, and aspartate 424 each coordinate Ca(2+). Asparagine 407 is a glycosylation site (N-linked (GlcNAc...) asparagine).

In terms of assembly, homotetramer.

The protein resides in the membrane. Probable pathogen-recognition receptor involved in peripheral immune surveillance in liver. May mediate the endocytosis of pathogens which are subsequently degraded in lysosomal compartments. Probably recognizes in a calcium-dependent manner high mannose N-linked oligosaccharides in a variety of pathogen antigens. Is a receptor for ICAM3, probably by binding to mannose-like carbohydrates. The sequence is that of C-type lectin domain family 4 member M (CLEC4M) from Pan troglodytes (Chimpanzee).